A 204-amino-acid polypeptide reads, in one-letter code: Large ribosomal subunit protein eL15 (204 aa).

Belongs to the eukaryotic ribosomal protein eL15 family. Component of the large ribosomal subunit.

The protein resides in the cytoplasm. In terms of biological role, component of the large ribosomal subunit. The ribosome is a large ribonucleoprotein complex responsible for the synthesis of proteins in the cell. In Siniperca knerii (Big-eye mandarin fish), this protein is Large ribosomal subunit protein eL15 (rpl15).